The primary structure comprises 184 residues: UPF0149 protein PSPA7_5968 (184 aa).

The protein belongs to the UPF0149 family.

The sequence is that of UPF0149 protein PSPA7_5968 from Pseudomonas paraeruginosa (strain DSM 24068 / PA7) (Pseudomonas aeruginosa (strain PA7)).